We begin with the raw amino-acid sequence, 1131 residues long: Inositol hexakisphosphate and diphosphoinositol-pentakisphosphate kinase 2 (1131 aa).

Residues 21-53 (DELLDQSKPENLDNLYEHTEDEEDEEDDEYDSP) are disordered. The segment covering 25 to 38 (DQSKPENLDNLYEH) has biased composition (basic and acidic residues). Residues 39 to 52 (TEDEEDEEDDEYDS) are compositionally biased toward acidic residues. 67–68 (KK) is a substrate binding site. ATP contacts are provided by residues R148, K201, H208, R227, 251 to 254 (EEFM), and 260 to 262 (DVK). 227-228 (RK) lines the substrate pocket. Substrate is bound by residues K262 and R276. ATP is bound by residues S278, D323, and 335 to 337 (DVN). Substrate is bound at residue 340–343 (SFVK). Positions 385–456 (PTTSGTKMEL…VLDIARQLLV (72 aa)) are polyphosphoinositide-binding domain. The segment at 912-951 (KGCEEDKNLPSGFGYRPASQENESSKKHTHANDSDEDLGV) is disordered. The segment covering 934–951 (ESSKKHTHANDSDEDLGV) has biased composition (basic and acidic residues).

This sequence belongs to the histidine acid phosphatase family. VIP1 subfamily.

It localises to the cytoplasm. The protein resides in the cytosol. It catalyses the reaction 1D-myo-inositol hexakisphosphate + ATP = 1-diphospho-1D-myo-inositol 2,3,4,5,6-pentakisphosphate + ADP. The catalysed reaction is 5-diphospho-1D-myo-inositol 1,2,3,4,6-pentakisphosphate + ATP + H(+) = 1,5-bis(diphospho)-1D-myo-inositol 2,3,4,6-tetrakisphosphate + ADP. In terms of biological role, bifunctional inositol kinase that acts in concert with the IP6K kinases IP6K1, IP6K2 and IP6K3 to synthesize the diphosphate group-containing inositol pyrophosphates diphosphoinositol pentakisphosphate, PP-InsP5, and bis-diphosphoinositol tetrakisphosphate, (PP)2-InsP4. PP-InsP5 and (PP)2-InsP4, also respectively called InsP7 and InsP8, regulate a variety of cellular processes, including apoptosis, vesicle trafficking, cytoskeletal dynamics, exocytosis, insulin signaling and neutrophil activation. Phosphorylates inositol hexakisphosphate (InsP6) at position 1 to produce PP-InsP5 which is in turn phosphorylated by IP6Ks to produce (PP)2-InsP4. Alternatively, phosphorylates PP-InsP5 at position 1, produced by IP6Ks from InsP6, to produce (PP)2-InsP4. This Xenopus laevis (African clawed frog) protein is Inositol hexakisphosphate and diphosphoinositol-pentakisphosphate kinase 2.